The sequence spans 140 residues: Large ribosomal subunit protein uL16 (140 aa).

The protein belongs to the universal ribosomal protein uL16 family. As to quaternary structure, part of the 50S ribosomal subunit.

Its function is as follows. Binds 23S rRNA and is also seen to make contacts with the A and possibly P site tRNAs. This is Large ribosomal subunit protein uL16 from Amoebophilus asiaticus (strain 5a2).